We begin with the raw amino-acid sequence, 417 residues long: Serine hydroxymethyltransferase (417 aa).

(6S)-5,6,7,8-tetrahydrofolate contacts are provided by residues Leu121 and 125–127 (GHL). Lys229 bears the N6-(pyridoxal phosphate)lysine mark. 354-356 (SPF) is a binding site for (6S)-5,6,7,8-tetrahydrofolate.

It belongs to the SHMT family. Homodimer. It depends on pyridoxal 5'-phosphate as a cofactor.

The protein localises to the cytoplasm. It carries out the reaction (6R)-5,10-methylene-5,6,7,8-tetrahydrofolate + glycine + H2O = (6S)-5,6,7,8-tetrahydrofolate + L-serine. The protein operates within one-carbon metabolism; tetrahydrofolate interconversion. It participates in amino-acid biosynthesis; glycine biosynthesis; glycine from L-serine: step 1/1. Its function is as follows. Catalyzes the reversible interconversion of serine and glycine with tetrahydrofolate (THF) serving as the one-carbon carrier. This reaction serves as the major source of one-carbon groups required for the biosynthesis of purines, thymidylate, methionine, and other important biomolecules. Also exhibits THF-independent aldolase activity toward beta-hydroxyamino acids, producing glycine and aldehydes, via a retro-aldol mechanism. This Stutzerimonas stutzeri (strain A1501) (Pseudomonas stutzeri) protein is Serine hydroxymethyltransferase.